An 88-amino-acid polypeptide reads, in one-letter code: UPF0297 protein SAK_2030 (88 aa).

This sequence belongs to the UPF0297 family.

The sequence is that of UPF0297 protein SAK_2030 from Streptococcus agalactiae serotype Ia (strain ATCC 27591 / A909 / CDC SS700).